Here is a 1395-residue protein sequence, read N- to C-terminus: MKDLLKFLKQQHKSEEFDNIRIGLASPDMIRSWSFGEVKKPETINYRTFKPERDGLFCARIFGPVKDYECLCGKYKRLKHRGVICEKCGVEVTLTKVRRERMGHIELASPVAHIWFLKSLPSRIGLMLDMTLRDIERVLYFESYVVAEPGMTTLERSQLLSEEEYLDALEEHGDEFEAKMGAEAVFELLKALDVDADVAAMREELPSINSETRRKKITKRLKLLESFQLSGNKPEWMILTVLPVLPPDLRPLVPLDGGRFATSDLNDLYRRVINRNNRLKRLLDLAAPDIIVRNEKRMLQEAVDALLDNGRRGRAITGSNKRPLKSLADMIKGKQGRFRQNLLGKRVDYSGRSVITVGPTLRLHQCGLPKKMALELFKPFIYGKLEGRGLATTIKAAKKLVEREDPEVWDVLDEVIREHPVLLNRAPTLHRLGIQAFEPTLIEGKAIQLHPLVCAAYNADFDGDQMAVHVPLTIEAQLEARALMMSTNNILSPANGEPIIVPSQDVVMGLYYMTRDRVNGLGEGMMFTSPDEAEKAYRTGNAELHARVKVRITEYDVAEDGSKTEKVTLTDTTVGRAILSLVLPKGLPFELINQAMGKKMISRLLNACYRTLGLKDTVIAADQIMYTGFHYAMIAGASVGIDDMVIPDAKKDIIEGAEAEVREIQEQFQSGLVTAGERYNKVIDIWSNANEKVAKAMMENLSIETVKNRDGEMEDQASFNSVFMMADSGARGSAAQIRQLAGMRGLMAKPDGSIIETPITANFREGLNVLQYFISTHGARKGLADTALKTANSGYLTRRLVDVAQDLVINNEDCGTFEGVKMTPLIEGGDVVEPLRERVLGRTVAEDVLKPGTNEILVERNVLLDEALVDMLESNSVDQIQVRSVITCENDFGVCAKCYGRDLARGHMVGHGEAVGVIAAQSIGEPGTQLTMRTFHIGGAASRASAENSVQVKTTGTLKLQNAKFVRNTDDKVVIVSRSTEITIIDDQGREKERYKVPYGAILTTDDNATVTSGEVVANWDPHSHPIVTERQAKISFADIDDSNTEMQQDELTGLTRIVVNDLSKANAKEPKLILESDEHGLQEIRLPSFTTIEATDGMQAKPGDVLARIPQESSKTRDITGGLPRVADLFEARKPKEPAILAEVSGTIGWGKETKGKKRLVITPKDADAYEEMIPKWRQLNVFEGENVEKGEVIADGPESPHDILRLRGISAVSNYIVNEVQEVYRLQGVKINDKHIEVVIRQMLRKCMITYAGDSNFLEGEQVEVSNVKIANRELEKQGKIPAQYETQLLGITKASLSTESFISAASFQETTRVLTEAAVQGKEDELRGLKENVIVGRLIPAGTGFAYHQKRTARKLAERQAVEELSVSAADAEQALTEALNAEVMDTPSSDE.

Zn(2+) contacts are provided by Cys70, Cys72, Cys85, and Cys88. Residues Asp460, Asp462, and Asp464 each coordinate Mg(2+). Positions 814, 888, 895, and 898 each coordinate Zn(2+).

This sequence belongs to the RNA polymerase beta' chain family. In terms of assembly, the RNAP catalytic core consists of 2 alpha, 1 beta, 1 beta' and 1 omega subunit. When a sigma factor is associated with the core the holoenzyme is formed, which can initiate transcription. Requires Mg(2+) as cofactor. Zn(2+) is required as a cofactor.

The catalysed reaction is RNA(n) + a ribonucleoside 5'-triphosphate = RNA(n+1) + diphosphate. Functionally, DNA-dependent RNA polymerase catalyzes the transcription of DNA into RNA using the four ribonucleoside triphosphates as substrates. In Pseudoalteromonas atlantica (strain T6c / ATCC BAA-1087), this protein is DNA-directed RNA polymerase subunit beta'.